Consider the following 360-residue polypeptide: Membrane-bound lytic murein transglycosylase C (360 aa).

A signal peptide spans 1–16 (MKKLLALAVIAPLLIS). Cysteine 17 carries the N-palmitoyl cysteine lipid modification. The S-diacylglycerol cysteine moiety is linked to residue cysteine 17.

This sequence belongs to the transglycosylase Slt family.

The protein resides in the cell outer membrane. It carries out the reaction Exolytic cleavage of the (1-&gt;4)-beta-glycosidic linkage between N-acetylmuramic acid (MurNAc) and N-acetylglucosamine (GlcNAc) residues in peptidoglycan, from either the reducing or the non-reducing ends of the peptidoglycan chains, with concomitant formation of a 1,6-anhydrobond in the MurNAc residue.. Functionally, murein-degrading enzyme. May play a role in recycling of muropeptides during cell elongation and/or cell division. The polypeptide is Membrane-bound lytic murein transglycosylase C (Salmonella arizonae (strain ATCC BAA-731 / CDC346-86 / RSK2980)).